The following is a 222-amino-acid chain: DnaJ homolog subfamily B member 9 (222 aa).

Positions 1 to 23 (MATPQSVFVFAICILMITELILA) are cleaved as a signal peptide. A J domain is found at 26–90 (SYYDILGVPK…NSRKEYDTIG (65 aa)). The segment at 91–222 (HSAFTNGKGQ…VTTYTDCSGQ (132 aa)) is divergent targeting domain. Position 133 is a phosphoserine (Ser133).

As to quaternary structure, interacts with HSPA5/BiP; interaction is direct. Interacts with ERN1/IRE1 (via the luminal region). Interacts with DERL1. Post-translationally, not N-glycosylated.

The protein localises to the endoplasmic reticulum lumen. Functionally, co-chaperone for Hsp70 protein HSPA5/BiP that acts as a key repressor of the ERN1/IRE1-mediated unfolded protein response (UPR). J domain-containing co-chaperones stimulate the ATPase activity of Hsp70 proteins and are required for efficient substrate recognition by Hsp70 proteins. In the unstressed endoplasmic reticulum, interacts with the luminal region of ERN1/IRE1 and selectively recruits HSPA5/BiP: HSPA5/BiP disrupts the dimerization of the active ERN1/IRE1 luminal region, thereby inactivating ERN1/IRE1. Also involved in endoplasmic reticulum-associated degradation (ERAD) of misfolded proteins. Required for survival of B-cell progenitors and normal antibody production. The polypeptide is DnaJ homolog subfamily B member 9 (Mus musculus (Mouse)).